Here is a 201-residue protein sequence, read N- to C-terminus: Small ribosomal subunit protein uS4 (201 aa).

The tract at residues 27-47 is disordered; that stretch reads SKKNYPPGQHGNSRKRKTSEY. The region spanning 92-152 is the S4 RNA-binding domain; it reads GRLDNVVYRL…EKSKSMEVIA (61 aa).

This sequence belongs to the universal ribosomal protein uS4 family. As to quaternary structure, part of the 30S ribosomal subunit. Contacts protein S5. The interaction surface between S4 and S5 is involved in control of translational fidelity.

In terms of biological role, one of the primary rRNA binding proteins, it binds directly to 16S rRNA where it nucleates assembly of the body of the 30S subunit. With S5 and S12 plays an important role in translational accuracy. This Parabacteroides distasonis (strain ATCC 8503 / DSM 20701 / CIP 104284 / JCM 5825 / NCTC 11152) protein is Small ribosomal subunit protein uS4.